The primary structure comprises 234 residues: uncharacterized protein (234 aa).

In terms of domain architecture, ABC transporter spans 5-234 (MELVDVWKIY…ERRGVVYGDT (230 aa)). 41-48 (GPSGSGKS) lines the ATP pocket.

This sequence belongs to the ABC transporter superfamily.

This is an uncharacterized protein from Thermotoga maritima (strain ATCC 43589 / DSM 3109 / JCM 10099 / NBRC 100826 / MSB8).